The sequence spans 208 residues: Protein-L-isoaspartate O-methyltransferase (208 aa).

Residue serine 59 is part of the active site.

This sequence belongs to the methyltransferase superfamily. L-isoaspartyl/D-aspartyl protein methyltransferase family.

Its subcellular location is the cytoplasm. The catalysed reaction is [protein]-L-isoaspartate + S-adenosyl-L-methionine = [protein]-L-isoaspartate alpha-methyl ester + S-adenosyl-L-homocysteine. Its function is as follows. Catalyzes the methyl esterification of L-isoaspartyl residues in peptides and proteins that result from spontaneous decomposition of normal L-aspartyl and L-asparaginyl residues. It plays a role in the repair and/or degradation of damaged proteins. The protein is Protein-L-isoaspartate O-methyltransferase of Escherichia coli O7:K1 (strain IAI39 / ExPEC).